We begin with the raw amino-acid sequence, 329 residues long: DNA-directed RNA polymerase subunit alpha (329 aa).

Residues 1–234 (MQGSVTEFLK…EQLDAFVELR (234 aa)) are alpha N-terminal domain (alpha-NTD). Residues 248–329 (FDPILLRPVD…WPPASLADDL (82 aa)) are alpha C-terminal domain (alpha-CTD).

The protein belongs to the RNA polymerase alpha chain family. Homodimer. The RNAP catalytic core consists of 2 alpha, 1 beta, 1 beta' and 1 omega subunit. When a sigma factor is associated with the core the holoenzyme is formed, which can initiate transcription.

It catalyses the reaction RNA(n) + a ribonucleoside 5'-triphosphate = RNA(n+1) + diphosphate. In terms of biological role, DNA-dependent RNA polymerase catalyzes the transcription of DNA into RNA using the four ribonucleoside triphosphates as substrates. In Shewanella amazonensis (strain ATCC BAA-1098 / SB2B), this protein is DNA-directed RNA polymerase subunit alpha.